Reading from the N-terminus, the 354-residue chain is Small ribosomal subunit biogenesis GTPase RsgA (354 aa).

Residues 1–46 are disordered; the sequence is MSKKKPLSQGQLRRMRANHEKRLNRDSGDKNTPELQDSSLGPEQSG. The span at 17 to 32 shows a compositional bias: basic and acidic residues; that stretch reads ANHEKRLNRDSGDKNT. Over residues 33–46 the composition is skewed to polar residues; sequence PELQDSSLGPEQSG. One can recognise a CP-type G domain in the interval 108-276; it reads HSSLSRPDLY…LIDSPGVREF (169 aa). Residues 164-167 and 218-226 each bind GTP; these read NKID and GQSGVGKSS. Residues cysteine 300, cysteine 305, histidine 307, and cysteine 313 each contribute to the Zn(2+) site.

Belongs to the TRAFAC class YlqF/YawG GTPase family. RsgA subfamily. In terms of assembly, monomer. Associates with 30S ribosomal subunit, binds 16S rRNA. The cofactor is Zn(2+).

The protein resides in the cytoplasm. Functionally, one of several proteins that assist in the late maturation steps of the functional core of the 30S ribosomal subunit. Helps release RbfA from mature subunits. May play a role in the assembly of ribosomal proteins into the subunit. Circularly permuted GTPase that catalyzes slow GTP hydrolysis, GTPase activity is stimulated by the 30S ribosomal subunit. In Shewanella oneidensis (strain ATCC 700550 / JCM 31522 / CIP 106686 / LMG 19005 / NCIMB 14063 / MR-1), this protein is Small ribosomal subunit biogenesis GTPase RsgA.